The following is a 252-amino-acid chain: Imidazole glycerol phosphate synthase subunit HisF (252 aa).

Active-site residues include Asp-11 and Asp-130.

It belongs to the HisA/HisF family. As to quaternary structure, heterodimer of HisH and HisF.

It is found in the cytoplasm. The enzyme catalyses 5-[(5-phospho-1-deoxy-D-ribulos-1-ylimino)methylamino]-1-(5-phospho-beta-D-ribosyl)imidazole-4-carboxamide + L-glutamine = D-erythro-1-(imidazol-4-yl)glycerol 3-phosphate + 5-amino-1-(5-phospho-beta-D-ribosyl)imidazole-4-carboxamide + L-glutamate + H(+). The protein operates within amino-acid biosynthesis; L-histidine biosynthesis; L-histidine from 5-phospho-alpha-D-ribose 1-diphosphate: step 5/9. IGPS catalyzes the conversion of PRFAR and glutamine to IGP, AICAR and glutamate. The HisF subunit catalyzes the cyclization activity that produces IGP and AICAR from PRFAR using the ammonia provided by the HisH subunit. This chain is Imidazole glycerol phosphate synthase subunit HisF, found in Anoxybacillus flavithermus (strain DSM 21510 / WK1).